The following is a 482-amino-acid chain: MKFIIKLFPEITIKSQSVRLRFIKILTGNIRNVLKPLVEDVAVTRHWDHIEVRAKEESRRDLVRDALTRIPGIHHILEVEDHPYTDMHDIFEQTLAMYREQLEEKTFCVRVKRRGKHTFTSIEVERYVGGGLNQNIPSARVRLNHPEVTVNLEIEDDRLLLVRGRFEGQGGYPIGTQEDVLSLISGGFDSGVSSYMLMRRGCRVHYCFFNLGGSAHEIGVKQVAHYLWNRFGSSHRVRFVAIDFAPVVGEILEKVDDGQMGVVLKRMMVRAASRVAERYGIQALVTGEALGQVSSQTLTNLRLIDGVSDTLVLRPLIAHDKEHIIRLARNIGTEDFAKTMPEFCGVISKSPTVKAVKARIEAEEEHFDFAILDRVVDEAQTMDIRDIARQSEADVVEVETIESLAEGDVVLDIRAPDEQEAKPLQLADSEVICLPFYKLANAFGDLDQVRRYVLYCDRGVMSRLQALYLREQGYDNVRVYRP.

In terms of domain architecture, THUMP spans D61–R165. ATP-binding positions include L183–I184, K265, G287, and Q296. Residues C344 and C456 are joined by a disulfide bond. The Rhodanese domain occupies L404–P482. C456 functions as the Cysteine persulfide intermediate in the catalytic mechanism.

It belongs to the ThiI family.

It is found in the cytoplasm. It catalyses the reaction [ThiI sulfur-carrier protein]-S-sulfanyl-L-cysteine + a uridine in tRNA + 2 reduced [2Fe-2S]-[ferredoxin] + ATP + H(+) = [ThiI sulfur-carrier protein]-L-cysteine + a 4-thiouridine in tRNA + 2 oxidized [2Fe-2S]-[ferredoxin] + AMP + diphosphate. The catalysed reaction is [ThiS sulfur-carrier protein]-C-terminal Gly-Gly-AMP + S-sulfanyl-L-cysteinyl-[cysteine desulfurase] + AH2 = [ThiS sulfur-carrier protein]-C-terminal-Gly-aminoethanethioate + L-cysteinyl-[cysteine desulfurase] + A + AMP + 2 H(+). Its pathway is cofactor biosynthesis; thiamine diphosphate biosynthesis. In terms of biological role, catalyzes the ATP-dependent transfer of a sulfur to tRNA to produce 4-thiouridine in position 8 of tRNAs, which functions as a near-UV photosensor. Also catalyzes the transfer of sulfur to the sulfur carrier protein ThiS, forming ThiS-thiocarboxylate. This is a step in the synthesis of thiazole, in the thiamine biosynthesis pathway. The sulfur is donated as persulfide by IscS. This Edwardsiella ictaluri (strain 93-146) protein is tRNA sulfurtransferase.